A 670-amino-acid chain; its full sequence is DNA ligase (670 aa).

Residues 31-35 (DAEYD), 76-77 (SL), and Glu108 contribute to the NAD(+) site. Catalysis depends on Lys110, which acts as the N6-AMP-lysine intermediate. 4 residues coordinate NAD(+): Arg131, Glu166, Lys271, and Lys295. Zn(2+) contacts are provided by Cys388, Cys391, Cys406, and Cys412. The BRCT domain occupies 579 to 668 (NIGGSLSGKK…NTPALKKETS (90 aa)).

It belongs to the NAD-dependent DNA ligase family. LigA subfamily. The cofactor is Mg(2+). It depends on Mn(2+) as a cofactor.

The catalysed reaction is NAD(+) + (deoxyribonucleotide)n-3'-hydroxyl + 5'-phospho-(deoxyribonucleotide)m = (deoxyribonucleotide)n+m + AMP + beta-nicotinamide D-nucleotide.. In terms of biological role, DNA ligase that catalyzes the formation of phosphodiester linkages between 5'-phosphoryl and 3'-hydroxyl groups in double-stranded DNA using NAD as a coenzyme and as the energy source for the reaction. It is essential for DNA replication and repair of damaged DNA. The chain is DNA ligase from Neorickettsia sennetsu (strain ATCC VR-367 / Miyayama) (Ehrlichia sennetsu).